A 408-amino-acid chain; its full sequence is (R)-2-hydroxyisocaproyl-CoA dehydratase alpha subunit (408 aa).

Residue E55 coordinates substrate. The [4Fe-4S] cluster site is built by C84, C117, and C346.

The protein belongs to the FldB/FldC dehydratase alpha/beta subunit family. In terms of assembly, part of the heterodimeric complex HadBC composed of (R)-2-hydroxyisocaproyl-CoA dehydratase alpha (HadB) and beta (HadC) subunit. [4Fe-4S] cluster serves as cofactor.

It carries out the reaction (R)-2-hydroxy-4-methylpentanoyl-CoA = 4-methylpent-2-enoyl-CoA + H2O. Activated by HadI. Involved in the reductive branch of L-leucine fermentation. Catalyzes the irreversible beta/alpha-elimination of water from (R)-2-hydroxyisocaproyl-CoA to yield isocaprenoyl-CoA. This beta/alpha-dehydration depends on the reductive formation of ketyl radicals on the substrate generated by injection of a single electron from the ATP-dependent activator protein HadI. The enzyme is specific for the R-isomer. The polypeptide is (R)-2-hydroxyisocaproyl-CoA dehydratase alpha subunit (Clostridioides difficile (Peptoclostridium difficile)).